We begin with the raw amino-acid sequence, 95 residues long: UPF0235 protein Swoo_1329 (95 aa).

This sequence belongs to the UPF0235 family.

The chain is UPF0235 protein Swoo_1329 from Shewanella woodyi (strain ATCC 51908 / MS32).